The primary structure comprises 268 residues: MSDAPTASALKTPVRVSGPVFFISDLHLSAGMPATAAAFERFVRTRAREARTLVILGDFFEYWVGDEELADPFHRHVAALLAELAQAGTRVLLMHGNRDFLLGKRFLATTQATLLPDPSVLEADGLRIVLAHGDALCTRDAAYMRFRRWTRKRWVQRLFLAMPLRWRLRIAQKMRADSEAGRALSANVAGEPRAAAMMGDVAPEAVDALFKAAGIPLLIHGHTHRPRLHHEPGGERWVLSDWDFDHAQPRGSFLRLQDGVLTAEPVTA.

Residues Asp-25, His-27, Asp-58, Asn-97, and His-132 each coordinate Mn(2+). A substrate-binding site is contributed by 97 to 98; sequence NR. Positions 140, 178, 191, and 222 each coordinate substrate. His-222 and His-224 together coordinate Mn(2+).

The protein belongs to the LpxH family. It depends on Mn(2+) as a cofactor.

It is found in the cell inner membrane. The enzyme catalyses UDP-2-N,3-O-bis[(3R)-3-hydroxytetradecanoyl]-alpha-D-glucosamine + H2O = 2-N,3-O-bis[(3R)-3-hydroxytetradecanoyl]-alpha-D-glucosaminyl 1-phosphate + UMP + 2 H(+). The protein operates within glycolipid biosynthesis; lipid IV(A) biosynthesis; lipid IV(A) from (3R)-3-hydroxytetradecanoyl-[acyl-carrier-protein] and UDP-N-acetyl-alpha-D-glucosamine: step 4/6. Functionally, hydrolyzes the pyrophosphate bond of UDP-2,3-diacylglucosamine to yield 2,3-diacylglucosamine 1-phosphate (lipid X) and UMP by catalyzing the attack of water at the alpha-P atom. Involved in the biosynthesis of lipid A, a phosphorylated glycolipid that anchors the lipopolysaccharide to the outer membrane of the cell. The protein is UDP-2,3-diacylglucosamine hydrolase of Ralstonia nicotianae (strain ATCC BAA-1114 / GMI1000) (Ralstonia solanacearum).